The chain runs to 148 residues: 3-hydroxyacyl-[acyl-carrier-protein] dehydratase FabZ (148 aa).

Histidine 48 is an active-site residue.

It belongs to the thioester dehydratase family. FabZ subfamily.

Its subcellular location is the cytoplasm. The enzyme catalyses a (3R)-hydroxyacyl-[ACP] = a (2E)-enoyl-[ACP] + H2O. Functionally, involved in unsaturated fatty acids biosynthesis. Catalyzes the dehydration of short chain beta-hydroxyacyl-ACPs and long chain saturated and unsaturated beta-hydroxyacyl-ACPs. This Nitratiruptor sp. (strain SB155-2) protein is 3-hydroxyacyl-[acyl-carrier-protein] dehydratase FabZ.